The chain runs to 149 residues: Prefoldin subunit alpha (149 aa).

This sequence belongs to the prefoldin subunit alpha family. Heterohexamer of two alpha and four beta subunits.

Its subcellular location is the cytoplasm. Molecular chaperone capable of stabilizing a range of proteins. Seems to fulfill an ATP-independent, HSP70-like function in archaeal de novo protein folding. The chain is Prefoldin subunit alpha from Methanospirillum hungatei JF-1 (strain ATCC 27890 / DSM 864 / NBRC 100397 / JF-1).